The following is a 125-amino-acid chain: Testis-specific protein LINC02914 (125 aa).

The segment covering Met1 to Ala12 has biased composition (basic and acidic residues). Residues Met1–Gln45 form a disordered region.

Expressed in testes and ejaculated spermatozoa (at protein level).

It localises to the cytoplasm. It is found in the nucleus. The protein resides in the cell projection. Its subcellular location is the cilium. The protein localises to the flagellum. May play a role in the flagellum biology. The sequence is that of Testis-specific protein LINC02914 from Homo sapiens (Human).